The sequence spans 409 residues: MGLLKSHLTVCLPPSVPFLILVSTLATAKSVTNSTLNGTDVVLGSVPVIIARTDHIIVKEGNSALINCSAFGIPDLEYKWYNSVGKLLKEMDDEKERGGGKWQMLDGGLLNITKVSFSDRGKYTCVASNIYGTINNTVTLRVIFTSGDMGVYYMVVCLVAFTIVMILNITRLCMMSSHLKKTEKAINEFFRTEGAEKLQKAFEIAKRIPIITSAKTLELAKVTQFKTMEFARYIEELARSVPLPPLIMNCRTIMEEIMEVVGLEEQGQNFVRHTPEGQEAPDRDEVYTIPNSLKRSESPTADSDASSLHEQPQQIAIKVSVHPQSKKDHVDDQEGENLEVKDEEETEPSEEHSPETAEPSTDITTTELTSEEASPVEAPERELPPAHLETTEPAVTCDRNTCIIYESHV.

The signal sequence occupies residues 1–28; the sequence is MGLLKSHLTVCLPPSVPFLILVSTLATA. The Extracellular portion of the chain corresponds to 29-148; the sequence is KSVTNSTLNG…TLRVIFTSGD (120 aa). N-linked (GlcNAc...) asparagine glycosylation is found at N33, N37, N67, N111, and N135. One can recognise an Ig-like C2-type domain in the interval 47–141; the sequence is PVIIARTDHI…GTINNTVTLR (95 aa). A disulfide bond links C68 and C125. A helical transmembrane segment spans residues 149-169; that stretch reads MGVYYMVVCLVAFTIVMILNI. Residues 170-409 lie on the Cytoplasmic side of the membrane; it reads TRLCMMSSHL…NTCIIYESHV (240 aa). Y287 carries the post-translational modification Phosphotyrosine. S298, S303, S306, and S307 each carry phosphoserine. Residues 319–392 form a disordered region; sequence VSVHPQSKKD…LPPAHLETTE (74 aa). Residues 333–348 are compositionally biased toward acidic residues; it reads QEGENLEVKDEEETEP. Polar residues predominate over residues 362 to 372; the sequence is DITTTELTSEE.

It is found in the cell membrane. It localises to the nucleus. The protein localises to the cytoplasm. Its function is as follows. May participate in the nuclear signaling of EGFR and MAPK1/ERK2. The polypeptide is Microfibrillar-associated protein 3-like (Mfap3l) (Rattus norvegicus (Rat)).